The primary structure comprises 407 residues: Tyrosine--tRNA ligase (407 aa).

The 'HIGH' region signature appears at 47–56 (PTAPDLHLGA). The 'KMSKS' region signature appears at 231 to 235 (KMSKS). Lys234 provides a ligand contact to ATP. Residues 342–403 (PRLSQLLVQV…GKRHFARVAL (62 aa)) enclose the S4 RNA-binding domain.

The protein belongs to the class-I aminoacyl-tRNA synthetase family. TyrS type 2 subfamily. In terms of assembly, homodimer.

It is found in the cytoplasm. It carries out the reaction tRNA(Tyr) + L-tyrosine + ATP = L-tyrosyl-tRNA(Tyr) + AMP + diphosphate + H(+). Functionally, catalyzes the attachment of tyrosine to tRNA(Tyr) in a two-step reaction: tyrosine is first activated by ATP to form Tyr-AMP and then transferred to the acceptor end of tRNA(Tyr). The polypeptide is Tyrosine--tRNA ligase (Acidithiobacillus ferrooxidans (Thiobacillus ferrooxidans)).